The chain runs to 338 residues: Protein FosB (338 aa).

Disordered stretches follow at residues 1-54 (MFQA…PGSF) and 80-179 (AQSQ…RREL). The segment covering 13 to 31 (SRCSSSPSAESQYLSSVDS) has biased composition (polar residues). A Phosphoserine modification is found at Ser-27. The segment covering 123–137 (PSTSTSTSGPVSARP) has biased composition (low complexity). One can recognise a bZIP domain in the interval 155–218 (EEKRRVRRER…ERLEFVLVAH (64 aa)). The basic motif stretch occupies residues 157 to 182 (KRRVRRERNKLAAAKCRNRRRELTDR). The segment at 183–211 (LQAETDQLEEEKAELESEIAELQKEKERL) is leucine-zipper. Disordered stretches follow at residues 222–276 (CKIP…PPNL) and 315–338 (AGSQ…LLAL). Residues 256–265 (LPPPPPPPLP) are compositionally biased toward pro residues. Polar residues predominate over residues 266 to 276 (FQSSRDAPPNL).

This sequence belongs to the bZIP family. Fos subfamily. As to quaternary structure, heterodimer; binds to DNA as heterodimer. Component of an AP-1 transcription factor complex; composed of FOS-JUN heterodimers. As part of the AP-1 transcription factor complex, forms heterodimers with JUN, JUNB or JUND, thereby binding to the AP-1 consensus sequence and stimulating transcription. In terms of processing, phosphorylated; phosphorylation is induced by chronic electroconvulsive seizure (ECS) treatment. As to expression, expressed in brain. Expressed in pyramidal cells in CA1 and CA3, in the dentate gyrus and the nucleus accumbens (at protein level).

It localises to the nucleus. Functionally, heterodimerizes with proteins of the JUN family to form an AP-1 transcription factor complex, thereby enhancing their DNA binding activity to an AP-1 consensus sequence 5'-TGA[GC]TCA-3' and enhancing their transcriptional activity. Exhibits transactivation activity in vitro. As part of the AP-1 complex, facilitates enhancer selection together with cell-type-specific transcription factors by collaboratively binding to nucleosomal enhancers and recruiting the SWI/SNF (BAF) chromatin remodeling complex to establish accessible chromatin. Together with JUN, plays a role in activation-induced cell death of T cells by binding to the AP-1 promoter site of FASLG/CD95L, and inducing its transcription in response to activation of the TCR/CD3 signaling pathway. Involved in the display of nurturing behavior towards newborns. May play a role in neurogenesis in the hippocampus and in learning and memory-related tasks by regulating the expression of various genes involved in neurogenesis, depression and epilepsy. Implicated in behavioral responses related to morphine reward and spatial memory. The chain is Protein FosB from Rattus norvegicus (Rat).